A 98-amino-acid chain; its full sequence is MSLTYMNMFMAFTISLLGLLMYRSHMMSSLLCLEGMMLSLFVMMTMAILNTHLTLASMIPIILLVFAACEAALGLSLLVMVSTTYGMDYVQNLNLLQC.

The next 3 helical transmembrane spans lie at 1 to 21, 29 to 49, and 61 to 81; these read MSLT…GLLM, SLLC…MAIL, and IILL…LVMV.

Belongs to the complex I subunit 4L family. In terms of assembly, core subunit of respiratory chain NADH dehydrogenase (Complex I) which is composed of 45 different subunits.

It is found in the mitochondrion inner membrane. It catalyses the reaction a ubiquinone + NADH + 5 H(+)(in) = a ubiquinol + NAD(+) + 4 H(+)(out). Functionally, core subunit of the mitochondrial membrane respiratory chain NADH dehydrogenase (Complex I) which catalyzes electron transfer from NADH through the respiratory chain, using ubiquinone as an electron acceptor. Part of the enzyme membrane arm which is embedded in the lipid bilayer and involved in proton translocation. The polypeptide is NADH-ubiquinone oxidoreductase chain 4L (MT-ND4L) (Vampyressa melissa (Melissa's yellow-eared bat)).